A 957-amino-acid polypeptide reads, in one-letter code: Receptor-like protein 34 (957 aa).

The first 31 residues, 1 to 31 (MKGSWVVSTSIIRITLSFTFLFICHFSDVLA), serve as a signal peptide directing secretion. Residues 32–910 (APTRHLCRPE…EEEDEDLISW (879 aa)) are Extracellular-facing. Residues Asn78, Asn101, Asn114, Asn143, Asn167, Asn191, and Asn215 are each glycosylated (N-linked (GlcNAc...) asparagine). LRR repeat units follow at residues 120-143 (LHFL…SIEN), 144-167 (LSHL…SIGN), 168-192 (LSRL…IGNL), 194-216 (HLTF…IGNL), 217-240 (SHLT…IGGL), 241-264 (SNLT…IGNL), 266-287 (QLIV…SFGN), 288-312 (LNQL…LLNL), 313-336 (TGLS…ITSL), 338-360 (NLMA…LFII), 361-384 (PSLT…NISS), 386-409 (SNLQ…ISKL), 412-434 (LQEL…IFSH), 435-459 (LKSL…ILPY), 460-483 (FKTL…SVSS), 487-510 (SQSI…LRTQ), 511-534 (HELG…LWTL), and 535-557 (PNLF…TKPE). N-linked (GlcNAc...) asparagine glycans are attached at residues Asn242 and Asn263. N-linked (GlcNAc...) asparagine glycosylation is found at Asn311 and Asn332. An N-linked (GlcNAc...) asparagine glycan is attached at Asn381. Asn477 carries N-linked (GlcNAc...) asparagine glycosylation. N-linked (GlcNAc...) asparagine glycosylation is found at Asn541, Asn544, Asn569, Asn593, Asn608, and Asn618. The LRR 19; degenerate repeat unit spans residues 558 to 580 (PSMAYLLGSNNNFTGKIPSFICE). 10 LRR repeats span residues 581–605 (LRSL…MENL), 606–630 (KSNL…IFES), 632–652 (RSLD…LRFF), 653–675 (SNLE…WLSS), 677–698 (QKLQ…QALF), 699–722 (PKLR…YFVE), 765–789 (LTIY…IGLL), 790–813 (KELH…IGNL), 815–837 (ALES…IGNL), and 839–862 (LLSY…QFLT). The N-linked (GlcNAc...) asparagine glycan is linked to Asn712. Residues Asn796, Asn812, Asn836, and Asn844 are each glycosylated (N-linked (GlcNAc...) asparagine). A helical membrane pass occupies residues 911–931 (IAAAIGFGPGIAFGLMFGYIL). Residues 932-957 (VSYKPEWFMNPFGRNNRRRKRHTTTH) are Cytoplasmic-facing.

The protein belongs to the RLP family.

It localises to the cell membrane. The protein is Receptor-like protein 34 of Arabidopsis thaliana (Mouse-ear cress).